A 421-amino-acid polypeptide reads, in one-letter code: tRNA(Ile)-lysidine synthase (421 aa).

26–31 (SGGADS) contacts ATP.

Belongs to the tRNA(Ile)-lysidine synthase family.

The protein resides in the cytoplasm. It catalyses the reaction cytidine(34) in tRNA(Ile2) + L-lysine + ATP = lysidine(34) in tRNA(Ile2) + AMP + diphosphate + H(+). Ligates lysine onto the cytidine present at position 34 of the AUA codon-specific tRNA(Ile) that contains the anticodon CAU, in an ATP-dependent manner. Cytidine is converted to lysidine, thus changing the amino acid specificity of the tRNA from methionine to isoleucine. The polypeptide is tRNA(Ile)-lysidine synthase (Streptococcus thermophilus (strain CNRZ 1066)).